Reading from the N-terminus, the 775-residue chain is 5-methyltetrahydropteroyltriglutamate--homocysteine methyltransferase (775 aa).

5-methyltetrahydropteroyltri-L-glutamate-binding positions include 16–19 and K115; that span reads REMK. L-homocysteine contacts are provided by residues 435-437 and E488; that span reads IGS. L-methionine-binding positions include 435–437 and E488; that span reads IGS. Residues 519 to 520 and W565 each bind 5-methyltetrahydropteroyltri-L-glutamate; that span reads RC. D603 serves as a coordination point for L-homocysteine. Position 603 (D603) interacts with L-methionine. E609 contacts 5-methyltetrahydropteroyltri-L-glutamate. Positions 645, 647, and 669 each coordinate Zn(2+). H698 serves as the catalytic Proton donor. C730 contributes to the Zn(2+) binding site.

Belongs to the vitamin-B12 independent methionine synthase family. It depends on Zn(2+) as a cofactor.

It carries out the reaction 5-methyltetrahydropteroyltri-L-glutamate + L-homocysteine = tetrahydropteroyltri-L-glutamate + L-methionine. Its pathway is amino-acid biosynthesis; L-methionine biosynthesis via de novo pathway; L-methionine from L-homocysteine (MetE route): step 1/1. In terms of biological role, catalyzes the transfer of a methyl group from 5-methyltetrahydrofolate to homocysteine resulting in methionine formation. The protein is 5-methyltetrahydropteroyltriglutamate--homocysteine methyltransferase of Coxiella burnetii (strain CbuG_Q212) (Coxiella burnetii (strain Q212)).